We begin with the raw amino-acid sequence, 140 residues long: Phosphoribosyl-AMP cyclohydrolase (140 aa).

Residue aspartate 78 participates in Mg(2+) binding. Cysteine 79 lines the Zn(2+) pocket. Mg(2+) is bound by residues aspartate 80 and aspartate 82. Zn(2+) contacts are provided by cysteine 96 and cysteine 103.

Belongs to the PRA-CH family. Homodimer. Mg(2+) is required as a cofactor. Zn(2+) serves as cofactor.

The protein resides in the cytoplasm. It catalyses the reaction 1-(5-phospho-beta-D-ribosyl)-5'-AMP + H2O = 1-(5-phospho-beta-D-ribosyl)-5-[(5-phospho-beta-D-ribosylamino)methylideneamino]imidazole-4-carboxamide. It functions in the pathway amino-acid biosynthesis; L-histidine biosynthesis; L-histidine from 5-phospho-alpha-D-ribose 1-diphosphate: step 3/9. Catalyzes the hydrolysis of the adenine ring of phosphoribosyl-AMP. This is Phosphoribosyl-AMP cyclohydrolase from Ralstonia pickettii (strain 12J).